The chain runs to 125 residues: Dirigent protein 22 (125 aa).

Asparagine 8, asparagine 30, and asparagine 65 each carry an N-linked (GlcNAc...) asparagine glycan.

The protein belongs to the plant dirigent protein family. As to quaternary structure, homodimer.

The protein localises to the secreted. It localises to the extracellular space. Its subcellular location is the apoplast. Functionally, dirigent proteins impart stereoselectivity on the phenoxy radical-coupling reaction, yielding optically active lignans from two molecules of coniferyl alcohol in the biosynthesis of lignans, flavonolignans, and alkaloids and thus plays a central role in plant secondary metabolism. This chain is Dirigent protein 22 (DIR22), found in Arabidopsis thaliana (Mouse-ear cress).